The sequence spans 343 residues: N-acetyl-gamma-glutamyl-phosphate reductase (343 aa).

Cys-146 is a catalytic residue.

It belongs to the NAGSA dehydrogenase family. Type 1 subfamily.

It is found in the cytoplasm. The catalysed reaction is N-acetyl-L-glutamate 5-semialdehyde + phosphate + NADP(+) = N-acetyl-L-glutamyl 5-phosphate + NADPH + H(+). It participates in amino-acid biosynthesis; L-arginine biosynthesis; N(2)-acetyl-L-ornithine from L-glutamate: step 3/4. Its function is as follows. Catalyzes the NADPH-dependent reduction of N-acetyl-5-glutamyl phosphate to yield N-acetyl-L-glutamate 5-semialdehyde. The polypeptide is N-acetyl-gamma-glutamyl-phosphate reductase (Acidothermus cellulolyticus (strain ATCC 43068 / DSM 8971 / 11B)).